Consider the following 68-residue polypeptide: Beta-toxin Cl13 (68 aa).

The 66-residue stretch at 1–66 (KEGYLVDYHT…VWPLPNKRCK (66 aa)) folds into the LCN-type CS-alpha/beta domain. Cystine bridges form between C12/C65, C16/C41, C25/C46, and C29/C48. K66 is subject to Lysine amide.

It belongs to the long (4 C-C) scorpion toxin superfamily. Sodium channel inhibitor family. Beta subfamily. Expressed by the venom gland.

It is found in the secreted. In terms of biological role, beta toxins bind voltage-independently at site-4 of sodium channels (Nav) and shift the voltage of activation toward more negative potentials thereby affecting sodium channel activation and promoting spontaneous and repetitive firing. Inhibits sodium channels Nav1.4/SCN4A, Nav1.5/SCN5A and Nav1.6/SCN8A. Also has a weak inhibitory effect on Nav1.2/SCN2A. Is lethal to mice. The sequence is that of Beta-toxin Cl13 from Centruroides limpidus (Mexican scorpion).